Reading from the N-terminus, the 98-residue chain is NADH-ubiquinone oxidoreductase chain 4L (98 aa).

3 helical membrane passes run methionine 1–methionine 21, serine 29–leucine 49, and isoleucine 61–valine 81.

The protein belongs to the complex I subunit 4L family. In terms of assembly, core subunit of respiratory chain NADH dehydrogenase (Complex I) which is composed of 45 different subunits.

The protein resides in the mitochondrion inner membrane. The enzyme catalyses a ubiquinone + NADH + 5 H(+)(in) = a ubiquinol + NAD(+) + 4 H(+)(out). Core subunit of the mitochondrial membrane respiratory chain NADH dehydrogenase (Complex I) which catalyzes electron transfer from NADH through the respiratory chain, using ubiquinone as an electron acceptor. Part of the enzyme membrane arm which is embedded in the lipid bilayer and involved in proton translocation. This chain is NADH-ubiquinone oxidoreductase chain 4L (MT-ND4L), found in Otaria byronia (South American sea lion).